Here is a 132-residue protein sequence, read N- to C-terminus: Small ribosomal subunit protein uS8 (132 aa).

As to quaternary structure, part of the 30S ribosomal subunit. Contacts proteins S5 and S12. A modified and unmodified form exist; the nature of the modification(s) is unknown.

Functionally, one of the primary rRNA binding proteins, it binds directly to 16S rRNA central domain where it helps coordinate assembly of the platform of the 30S subunit. This is Small ribosomal subunit protein uS8 from Rhodopseudomonas palustris (strain ATCC BAA-98 / CGA009).